Consider the following 364-residue polypeptide: F-box/LRR-repeat protein At1g55660 (364 aa).

An F-box domain is found at 52–98; the sequence is MDKISQLPDELLVKVLSFLSTKDAVSTSILSMRWKSLWMWLPKLEYN. LRR repeat units follow at residues 158–179, 185–206, 207–228, 233–254, 256–277, and 279–300; these read NVRE…LPKS, SIVI…VCLP, SLKT…HRLL, VLED…SVIV, SLQR…KMNS, and SLKY…ESDS.

This is F-box/LRR-repeat protein At1g55660 from Arabidopsis thaliana (Mouse-ear cress).